Reading from the N-terminus, the 86-residue chain is Small ribosomal subunit protein bS20 (86 aa).

Positions 1-27 are enriched in basic residues; the sequence is MANSKSAKKRATQAERRRQHNASRRSM. A disordered region spans residues 1–28; the sequence is MANSKSAKKRATQAERRRQHNASRRSMM.

It belongs to the bacterial ribosomal protein bS20 family.

In terms of biological role, binds directly to 16S ribosomal RNA. This chain is Small ribosomal subunit protein bS20, found in Aliivibrio salmonicida (strain LFI1238) (Vibrio salmonicida (strain LFI1238)).